The following is a 269-amino-acid chain: Putative pyruvate, phosphate dikinase regulatory protein (269 aa).

Residue 147–154 (GVSRTSKT) coordinates ADP.

It belongs to the pyruvate, phosphate/water dikinase regulatory protein family. PDRP subfamily.

The catalysed reaction is N(tele)-phospho-L-histidyl/L-threonyl-[pyruvate, phosphate dikinase] + ADP = N(tele)-phospho-L-histidyl/O-phospho-L-threonyl-[pyruvate, phosphate dikinase] + AMP + H(+). It catalyses the reaction N(tele)-phospho-L-histidyl/O-phospho-L-threonyl-[pyruvate, phosphate dikinase] + phosphate + H(+) = N(tele)-phospho-L-histidyl/L-threonyl-[pyruvate, phosphate dikinase] + diphosphate. Bifunctional serine/threonine kinase and phosphorylase involved in the regulation of the pyruvate, phosphate dikinase (PPDK) by catalyzing its phosphorylation/dephosphorylation. This Geotalea daltonii (strain DSM 22248 / JCM 15807 / FRC-32) (Geobacter daltonii) protein is Putative pyruvate, phosphate dikinase regulatory protein.